A 286-amino-acid polypeptide reads, in one-letter code: Elongation factor Ts (286 aa).

The involved in Mg(2+) ion dislocation from EF-Tu stretch occupies residues 79–82; that stretch reads TDFV.

Belongs to the EF-Ts family.

The protein localises to the cytoplasm. Associates with the EF-Tu.GDP complex and induces the exchange of GDP to GTP. It remains bound to the aminoacyl-tRNA.EF-Tu.GTP complex up to the GTP hydrolysis stage on the ribosome. The chain is Elongation factor Ts from Wolbachia sp. subsp. Drosophila simulans (strain wRi).